A 310-amino-acid chain; its full sequence is tRNA-cytidine(32) 2-sulfurtransferase (310 aa).

Positions serine 58–serine 63 match the PP-loop motif motif. [4Fe-4S] cluster-binding residues include cysteine 133, cysteine 136, and cysteine 224.

This sequence belongs to the TtcA family. In terms of assembly, homodimer. It depends on Mg(2+) as a cofactor. [4Fe-4S] cluster is required as a cofactor.

Its subcellular location is the cytoplasm. It carries out the reaction cytidine(32) in tRNA + S-sulfanyl-L-cysteinyl-[cysteine desulfurase] + AH2 + ATP = 2-thiocytidine(32) in tRNA + L-cysteinyl-[cysteine desulfurase] + A + AMP + diphosphate + H(+). Its pathway is tRNA modification. Catalyzes the ATP-dependent 2-thiolation of cytidine in position 32 of tRNA, to form 2-thiocytidine (s(2)C32). The sulfur atoms are provided by the cysteine/cysteine desulfurase (IscS) system. This Paracidovorax citrulli (strain AAC00-1) (Acidovorax citrulli) protein is tRNA-cytidine(32) 2-sulfurtransferase.